The chain runs to 92 residues: Protein S100-B (92 aa).

Ser2 bears the N-acetylserine mark. 2 consecutive EF-hand domains span residues 13 to 48 (DVFHQYSGREGDKHKLKKSELKELINNELSHFLEEI) and 49 to 84 (KEQEVVDKVMETLDEDGDGECDFQEFMAFVAMVTTA). His16 is a Zn(2+) binding site. Ser19, Glu22, and Asp24 together coordinate Ca(2+). His26 contacts Zn(2+). Positions 62, 64, 66, 68, and 73 each coordinate Ca(2+). 2 residues coordinate Zn(2+): His86 and His91.

The protein belongs to the S-100 family. As to quaternary structure, dimer of either two alpha chains, or two beta chains, or one alpha and one beta chain. The S100B dimer binds two molecules of STK38. Interacts with CACYBP in a calcium-dependent manner. Interacts with ATAD3A; this interaction probably occurs in the cytosol prior to ATAD3A mitochondrial targeting. Interacts with S100A6. The S100B dimer interacts with two molecules of CAPZA1. Interacts with AGER. Interacts with PPP5C (via TPR repeats); the interaction is calcium-dependent and modulates PPP5C activity. Interacts with TPPP; this interaction inhibits TPPP dimerization. Interacts with isoform CLSTN3beta of CLSTN3; interaction promotes secretion.

It is found in the cytoplasm. The protein resides in the nucleus. Its subcellular location is the secreted. Its function is as follows. Small zinc- and- and calcium-binding protein that is highly expressed in astrocytes and constitutes one of the most abundant soluble proteins in brain. Weakly binds calcium but binds zinc very tightly-distinct binding sites with different affinities exist for both ions on each monomer. Physiological concentrations of potassium ion antagonize the binding of both divalent cations, especially affecting high-affinity calcium-binding sites. Acts as a neurotrophic factor that promotes astrocytosis and axonal proliferation. Involved in innervation of thermogenic adipose tissue by acting as an adipocyte-derived neurotrophic factor that promotes sympathetic innervation of adipose tissue. Binds to and initiates the activation of STK38 by releasing autoinhibitory intramolecular interactions within the kinase. Interaction with AGER after myocardial infarction may play a role in myocyte apoptosis by activating ERK1/2 and p53/TP53 signaling. Could assist ATAD3A cytoplasmic processing, preventing aggregation and favoring mitochondrial localization. May mediate calcium-dependent regulation on many physiological processes by interacting with other proteins, such as TPR-containing proteins, and modulating their activity. The sequence is that of Protein S100-B from Mus musculus (Mouse).